Here is a 728-residue protein sequence, read N- to C-terminus: 1,4-alpha-glucan branching enzyme GlgB (728 aa).

D405 (nucleophile) is an active-site residue. E458 (proton donor) is an active-site residue.

The protein belongs to the glycosyl hydrolase 13 family. GlgB subfamily. As to quaternary structure, monomer.

The enzyme catalyses Transfers a segment of a (1-&gt;4)-alpha-D-glucan chain to a primary hydroxy group in a similar glucan chain.. Its pathway is glycan biosynthesis; glycogen biosynthesis. In terms of biological role, catalyzes the formation of the alpha-1,6-glucosidic linkages in glycogen by scission of a 1,4-alpha-linked oligosaccharide from growing alpha-1,4-glucan chains and the subsequent attachment of the oligosaccharide to the alpha-1,6 position. The chain is 1,4-alpha-glucan branching enzyme GlgB from Shigella flexneri.